The following is a 371-amino-acid chain: Aldose sugar dehydrogenase YliI (371 aa).

The N-terminal stretch at 1–20 (MHRQSFFLVPLICLSSALWA) is a signal peptide. Position 82 (Gln-82) interacts with pyrroloquinoline quinone. The active-site Proton acceptor is His-147. The segment at 214-215 (RN) is PQQ. Ca(2+)-binding residues include Glu-240 and Tyr-250. Tyr-261 lines the pyrroloquinoline quinone pocket. 2 PQQ regions span residues 312–314 (ALK) and 341–343 (RIR).

It belongs to the PQQ oxidoreductase GdhB family. As to quaternary structure, monomer. Ca(2+) is required as a cofactor. Pyrroloquinoline quinone serves as cofactor.

It localises to the cell outer membrane. Its function is as follows. Aldose sugar dehydrogenase with broad substrate specificity. The physiological substrate is unknown. Can oxidize glucose to gluconolactone. Can also utilize D-arabinose, L-arabinose and 2-deoxy-glucose. Has higher activity towards oligomeric sugars, such as maltose, maltotriose or cellobiose. It may function to input sugar-derived electrons into the respiratory network. The chain is Aldose sugar dehydrogenase YliI (yliI) from Escherichia coli (strain K12).